A 1239-amino-acid chain; its full sequence is Codanin-1 (1239 aa).

Ala-2 carries the N-acetylalanine modification. The segment covering 61-72 (SRVLPQGPSTPA) has biased composition (polar residues). Disordered stretches follow at residues 61–249 (SRVL…PPGC) and 261–299 (KART…ADPA). Thr-70 carries the post-translational modification Phosphothreonine. 3 stretches are compositionally biased toward low complexity: residues 77–88 (ASAALPARQGAP), 95–116 (ARSQ…PLAR), and 138–179 (GAAE…LSNL). The interaction with ASF1A/B stretch occupies residues 193-213 (AGRTKPSRRINPTPVSEERSL). Residues 219-238 (CFTSPPISCVPSSQPSTLDT) are compositionally biased toward polar residues. Residue Ser-270 is modified to Phosphoserine. A run of 2 helical transmembrane segments spans residues 317 to 337 (CIAE…LQLL) and 631 to 651 (FAVV…VAFL).

As to quaternary structure, interacts with ASF1A and ASF1B. Found in a cytosolic complex with ASF1A, ASF1B, IPO4 and histones H3.1 and H4. Widely expressed in adult mice, the highest levels can be measured in erythropoietic cells.

It localises to the cytoplasm. The protein localises to the nucleus. The protein resides in the membrane. Its function is as follows. May act as a negative regulator of ASF1 in chromatin assembly. This chain is Codanin-1 (Cdan1), found in Mus musculus (Mouse).